Consider the following 329-residue polypeptide: NADH-quinone oxidoreductase subunit H (329 aa).

The next 8 membrane-spanning stretches (helical) occupy residues 11 to 31 (IVVA…CGAL), 81 to 101 (LIFT…FAVV), 114 to 134 (IGLL…LFAG), 154 to 174 (ISYE…TGSF), 187 to 207 (TWFI…GVAV), 238 to 258 (FFVG…TLFF), 270 to 290 (QLSF…FILL), and 309 to 329 (FCLP…LAAQ).

It belongs to the complex I subunit 1 family. As to quaternary structure, NDH-1 is composed of 13 different subunits. Subunits NuoA, H, J, K, L, M, N constitute the membrane sector of the complex.

It localises to the cell inner membrane. The catalysed reaction is a quinone + NADH + 5 H(+)(in) = a quinol + NAD(+) + 4 H(+)(out). Functionally, NDH-1 shuttles electrons from NADH, via FMN and iron-sulfur (Fe-S) centers, to quinones in the respiratory chain. The immediate electron acceptor for the enzyme in this species is believed to be ubiquinone. Couples the redox reaction to proton translocation (for every two electrons transferred, four hydrogen ions are translocated across the cytoplasmic membrane), and thus conserves the redox energy in a proton gradient. This subunit may bind ubiquinone. The polypeptide is NADH-quinone oxidoreductase subunit H (Azotobacter vinelandii (strain DJ / ATCC BAA-1303)).